The chain runs to 461 residues: Squalene synthase BSS (461 aa).

Residues Arg-51 and Arg-76 each coordinate NADP(+). Residues Asp-79, Glu-82, and Asp-83 each coordinate Mg(2+). Arg-219, Lys-322, and Arg-324 together coordinate NADP(+). Residues 430–450 (VTQHWWSILIFLISIAVFFIP) form a helical membrane-spanning segment.

It belongs to the phytoene/squalene synthase family. Requires Mg(2+) as cofactor.

It is found in the endoplasmic reticulum membrane. The catalysed reaction is 2 (2E,6E)-farnesyl diphosphate + NADPH + H(+) = squalene + 2 diphosphate + NADP(+). The enzyme catalyses 2 (2E,6E)-farnesyl diphosphate + NADH + H(+) = squalene + 2 diphosphate + NAD(+). Functionally, converts farnesyl diphosphate (FPP) into squalene, a precursor for sterol biosynthesis in eukaryotes. Does not possess botryococcene synthase activity. The polypeptide is Squalene synthase BSS (Botryococcus braunii (Green alga)).